The following is a 214-amino-acid chain: 3,4-dihydroxy-2-butanone 4-phosphate synthase (214 aa).

D-ribulose 5-phosphate contacts are provided by residues 37–38 (RE), aspartate 42, 150–154 (RRGHT), and glutamate 174. Glutamate 38 is a Mg(2+) binding site. Histidine 153 lines the Mg(2+) pocket.

Belongs to the DHBP synthase family. As to quaternary structure, homodimer. The cofactor is Mg(2+). Mn(2+) is required as a cofactor.

It catalyses the reaction D-ribulose 5-phosphate = (2S)-2-hydroxy-3-oxobutyl phosphate + formate + H(+). The protein operates within cofactor biosynthesis; riboflavin biosynthesis; 2-hydroxy-3-oxobutyl phosphate from D-ribulose 5-phosphate: step 1/1. Functionally, catalyzes the conversion of D-ribulose 5-phosphate to formate and 3,4-dihydroxy-2-butanone 4-phosphate. The polypeptide is 3,4-dihydroxy-2-butanone 4-phosphate synthase (Pasteurella multocida (strain Pm70)).